Reading from the N-terminus, the 466-residue chain is RuvB-like helicase 2 (466 aa).

74-81 contacts ATP; sequence GPPSTGKT.

The protein belongs to the RuvB family. As to quaternary structure, may form heterododecamers with RVB1. Component of the SWR1 chromatin remodeling complex, the INO80 chromatin remodeling complex, and of the R2TP complex.

Its subcellular location is the nucleus. The enzyme catalyses ATP + H2O = ADP + phosphate + H(+). In terms of biological role, DNA helicase which participates in several chromatin remodeling complexes, including the SWR1 and the INO80 complexes. The SWR1 complex mediates the ATP-dependent exchange of histone H2A for the H2A variant HZT1 leading to transcriptional regulation of selected genes by chromatin remodeling. The INO80 complex remodels chromatin by shifting nucleosomes and is involved in DNA repair. Also involved in pre-rRNA processing. The chain is RuvB-like helicase 2 (RVB2) from Yarrowia lipolytica (strain CLIB 122 / E 150) (Yeast).